The chain runs to 521 residues: Protein DML1 (521 aa).

Belongs to the misato family.

It localises to the mitochondrion. Functionally, involved in the partitioning of the mitochondrial organelle and mitochondrial DNA (mtDNA) inheritance. The sequence is that of Protein DML1 (DML1) from Phaeosphaeria nodorum (strain SN15 / ATCC MYA-4574 / FGSC 10173) (Glume blotch fungus).